The sequence spans 84 residues: UPF0457 protein BT9727_3043 (84 aa).

Belongs to the UPF0457 family.

The sequence is that of UPF0457 protein BT9727_3043 from Bacillus thuringiensis subsp. konkukian (strain 97-27).